Here is a 408-residue protein sequence, read N- to C-terminus: MSLSVTRENFDEWMVPVYVPAPLIPVRGEGSRLWDQQGKEYIDFAGGIAVNALGHAHPALREALNEQANRFWHTGNGYTNEPALRLAKKLIDATFAERVFFCNSGAEANEAALKLARKYAHDRVGNHKSGIVAFKNAFHGRTLFTVSAGGQPTYSQDFAPLPPDIRHAAYNDLNSASALIDDNTCAVIVEPVQGEGGVIPATKAFLQGLRELCDRHQALLIFDEVQTGVGRTGKLYAYMHYGVTPDILTTAKALGGGFPIGAMLTTQDYASVMTPGTHGTTYGGNPLATAVAGKVLDIINTPEMQNGVRQRHDAFIERLNTLNVRFGMFSEIRGLGLLLGCVLQTEFAGKAKLIAQEAAKAGVMVLIAGGDVVRFAPALNVSDEEIATGLDRFALACERLQTGGASCG.

Lys-252 carries the post-translational modification N6-(pyridoxal phosphate)lysine.

The protein belongs to the class-III pyridoxal-phosphate-dependent aminotransferase family. AstC subfamily. Requires pyridoxal 5'-phosphate as cofactor.

The catalysed reaction is N(2)-succinyl-L-ornithine + 2-oxoglutarate = N-succinyl-L-glutamate 5-semialdehyde + L-glutamate. The protein operates within amino-acid degradation; L-arginine degradation via AST pathway; L-glutamate and succinate from L-arginine: step 3/5. In terms of biological role, catalyzes the transamination of N(2)-succinylornithine and alpha-ketoglutarate into N(2)-succinylglutamate semialdehyde and glutamate. Can also act as an acetylornithine aminotransferase. This chain is Succinylornithine transaminase, found in Salmonella paratyphi A (strain ATCC 9150 / SARB42).